The sequence spans 82 residues: Small ribosomal subunit protein uS17 (82 aa).

Belongs to the universal ribosomal protein uS17 family. In terms of assembly, part of the 30S ribosomal subunit.

One of the primary rRNA binding proteins, it binds specifically to the 5'-end of 16S ribosomal RNA. The chain is Small ribosomal subunit protein uS17 from Ehrlichia ruminantium (strain Gardel).